A 455-amino-acid polypeptide reads, in one-letter code: Nuclear receptor subfamily 6 group A member 1-B (455 aa).

A DNA-binding region (nuclear receptor) is located at residues 38 to 113; it reads ERWCLICGDR…MGMNRKAIRE (76 aa). 2 NR C4-type zinc fingers span residues 41-61 and 77-96; these read CLICGDRASGLHYGIISCEGC and CNRDKNCQMSRKQRNRCQYC. Residues 145–173 are disordered; that stretch reads EGSDLSDSWSHGYSNHSSPGNSLSEGGQS. Polar residues predominate over residues 149–165; the sequence is LSDSWSHGYSNHSSPGN. One can recognise an NR LBD domain in the interval 215-446; sequence QTHTLTGQIL…YSCTTNQNPW (232 aa).

This sequence belongs to the nuclear hormone receptor family. NR6 subfamily. Homodimer.

It localises to the nucleus. In terms of biological role, probable orphan nuclear receptor. Binds to a response element containing repeats of the motif 5'-AGGTCA-3'. This Danio rerio (Zebrafish) protein is Nuclear receptor subfamily 6 group A member 1-B.